The chain runs to 252 residues: Large ribosomal subunit protein uL4 (252 aa).

Belongs to the universal ribosomal protein uL4 family. As to quaternary structure, part of the 50S ribosomal subunit.

In terms of biological role, one of the primary rRNA binding proteins, this protein initially binds near the 5'-end of the 23S rRNA. It is important during the early stages of 50S assembly. It makes multiple contacts with different domains of the 23S rRNA in the assembled 50S subunit and ribosome. Its function is as follows. Forms part of the polypeptide exit tunnel. The sequence is that of Large ribosomal subunit protein uL4 from Methanococcus maripaludis (strain C7 / ATCC BAA-1331).